We begin with the raw amino-acid sequence, 330 residues long: MEIISVIVIGGLVLVAIVATLYMVPLRLWIAAQASGAGVSMLTLIAMRLRRVPPDQIVNARISAVKAGLEEVSVDMLEAHYLARGRVEAVVNALISAGKAGMELDFSRAAAIDLAGRNVLEAVAMSVNPRVIETPKVSAVAKDGIQLLAIARVTVRANIDRLVGGAGEQTVLARVGEGVVSTIGSADDYKHVLENPDTISKNVLKKGLDAGTAFEILSIDIADVDVGSNIGAKLQTEQAEADKQVAQAKAESRRALAVAQEQEMKAKTQEMRAKLVEAESTIPLAVAEALRTGKLGVMDYYNMRNVIADTEMRQGIAGTTGGKPDPAGES.

The next 2 membrane-spanning stretches (helical) occupy residues 3–23 and 26–46; these read IISVIVIGGLVLVAIVATLYM and LRLWIAAQASGAGVSMLTLIA.

The protein belongs to the flotillin-like FloA family. In terms of assembly, homooligomerizes.

Its subcellular location is the cell membrane. It is found in the membrane raft. Functionally, found in functional membrane microdomains (FMM) that may be equivalent to eukaryotic membrane rafts. FMMs are highly dynamic and increase in number as cells age. Flotillins are thought to be important factors in membrane fluidity. In Sorangium cellulosum (strain So ce56) (Polyangium cellulosum (strain So ce56)), this protein is Flotillin-like protein FloA.